We begin with the raw amino-acid sequence, 69 residues long: uncharacterized protein (69 aa).

Residues 23–46 are disordered; that stretch reads AENEGNRKENRRQMQSRNERGCNV. The segment covering 26-44 has biased composition (basic and acidic residues); that stretch reads EGNRKENRRQMQSRNERGC.

This is an uncharacterized protein from Homo sapiens (Human).